A 609-amino-acid chain; its full sequence is Oxidoreductase tpcJ (609 aa).

Positions 1-16 (MITVIKWLVSGCCALA) are cleaved as a signal peptide. 7 N-linked (GlcNAc...) asparagine glycosylation sites follow: N63, N107, N113, N240, N283, N471, and N601. 3 consecutive Plastocyanin-like domains span residues 66 to 186 (VSQQ…HGPS), 196 to 351 (PWLL…RYDE), and 429 to 567 (VDWK…EQPK).

This sequence belongs to the multicopper oxidase family. In terms of tissue distribution, specifically expressed in conidia.

Its pathway is secondary metabolite biosynthesis. In terms of biological role, oxidoreductase; part of the gene cluster that mediates the biosynthesis of trypacidin, a mycotoxin with antiprotozoal activity and that plays a role in the infection process. The pathway begins with the synthesis of atrochrysone thioester by the polyketide synthase (PKS) tpcC. The atrochrysone carboxyl ACP thioesterase tpcB then breaks the thioester bond and releases the atrochrysone carboxylic acid from tpcC. The decarboxylase tpcK converts atrochrysone carboxylic acid to atrochrysone which is further reduced into emodin anthrone. The next step is performed by the emodin anthrone oxygenase tpcL that catalyzes the oxidation of emodinanthrone to emodin. Emodin O-methyltransferase encoded by tpcA catalyzes methylation of the 8-hydroxy group of emodin to form questin. Ring cleavage of questin by questin oxidase tpcI leads to desmethylsulochrin via several intermediates including questin epoxide. Another methylation step catalyzed by tpcM leads to the formation of sulochrin which is further converted to monomethylsulfochrin by tpcH. Finally, the tpcJ catalyzes the conversion of monomethylsulfochrin to trypacidin. Trypacidin is toxic for human pulmonary and bronchial epithelial cells by initiating the intracellular formation of nitric oxide (NO) and hydrogen peroxide (H(2)O(2)), thus triggering host necrotic cell death. The trypacidin pathway is also able to produce endocrocin via a distinct route from the endocrocin Enc pathway. This is Oxidoreductase tpcJ from Aspergillus fumigatus (strain ATCC MYA-4609 / CBS 101355 / FGSC A1100 / Af293) (Neosartorya fumigata).